The chain runs to 275 residues: Fructose-2,6-bisphosphatase TIGAR (275 aa).

H11 acts as the Tele-phosphohistidine intermediate in catalysis. Residue E89 is the Proton donor/acceptor of the active site.

Belongs to the phosphoglycerate mutase family.

Its subcellular location is the cytoplasm. It localises to the nucleus. It is found in the mitochondrion. The catalysed reaction is beta-D-fructose 2,6-bisphosphate + H2O = beta-D-fructose 6-phosphate + phosphate. Its function is as follows. Fructose-bisphosphatase hydrolyzing fructose-2,6-bisphosphate as well as fructose-1,6-bisphosphate. Acts as a negative regulator of glycolysis by lowering intracellular levels of fructose-2,6-bisphosphate in a p53/TP53-dependent manner, resulting in the pentose phosphate pathway (PPP) activation and NADPH production. Contributes to the generation of reduced glutathione to cause a decrease in intracellular reactive oxygen species (ROS) content, correlating with its ability to protect cells from oxidative or metabolic stress-induced cell death. May play a role in mitophagy inhibition. This is Fructose-2,6-bisphosphatase TIGAR from Xenopus tropicalis (Western clawed frog).